The following is a 662-amino-acid chain: Envelope glycoprotein (662 aa).

An N-terminal signal peptide occupies residues 1–34 (MEGPTHPKPSKDKTFSWDLMILVGVLLRLDVGMA). The Extracellular segment spans residues 35-606 (NPSPHQIYNV…FNKSPWFTTL (572 aa)). Residues asparagine 43 and asparagine 58 are each glycosylated (N-linked (GlcNAc...) asparagine; by host). 2 cysteine pairs are disulfide-bonded: cysteine 115/cysteine 132 and cysteine 124/cysteine 137. The tract at residues 251 to 281 (VLPDQKPPSRQSQIESRVTPHHSQGNGGTPG) is disordered. The segment covering 258 to 274 (PSRQSQIESRVTPHHSQ) has biased composition (polar residues). Residues asparagine 286, asparagine 322, and asparagine 327 are each glycosylated (N-linked (GlcNAc...) asparagine; by host). Cystine bridges form between cysteine 332/cysteine 335, cysteine 332/cysteine 559, and cysteine 551/cysteine 558. The short motif at 332–335 (CWLC) is the CXXC element. N-linked (GlcNAc...) asparagine; by host glycans are attached at residues asparagine 351, asparagine 354, and asparagine 430. A fusion peptide region spans residues 468–488 (ISLTVALMLGGLTVGGIAAGV). Coiled coils occupy residues 496-545 (LETA…ILFL) and 555-591 (KEECCFYADHTGLVRDNMAKLRERLKQRQQLFDSQQG). The interval 534 to 550 (LQNRRGLDILFLQEGGL) is immunosuppression. The short motif at 551-559 (CAALKEECC) is the CX6CC element. A helical membrane pass occupies residues 607 to 627 (ISSIMGPLLILLLILLFGPCI). A lipid anchor (S-palmitoyl cysteine; by host) is attached at cysteine 626. The Cytoplasmic portion of the chain corresponds to 628-662 (LNRLVQFVKDRISVVQALILTQQYQQIKQYDPDQP).

The mature envelope protein (Env) consists of a trimer of SU-TM heterodimers attached by a labile interchain disulfide bond. In terms of processing, specific enzymatic cleavages in vivo yield mature proteins. Envelope glycoproteins are synthesized as an inactive precursor that is N-glycosylated and processed likely by host cell furin or by a furin-like protease in the Golgi to yield the mature SU and TM proteins. The cleavage site between SU and TM requires the minimal sequence [KR]-X-[KR]-R. The R-peptide is released from the C-terminus of the cytoplasmic tail of the TM protein upon particle formation as a result of proteolytic cleavage by the viral protease. Cleavage of this peptide is required for TM to become fusogenic. Post-translationally, the CXXC motif is highly conserved across a broad range of retroviral envelope proteins. It is thought to participate in the formation of a labile disulfide bond possibly with the CX6CC motif present in the transmembrane protein. Isomerization of the intersubunit disulfide bond to an SU intrachain disulfide bond is thought to occur upon receptor recognition in order to allow membrane fusion. The transmembrane protein is palmitoylated. In terms of processing, the R-peptide is palmitoylated.

Its subcellular location is the virion membrane. It is found in the host cell membrane. In terms of biological role, the surface protein (SU) attaches the virus to the host cell by binding to its receptor. This interaction triggers the refolding of the transmembrane protein (TM) and is thought to activate its fusogenic potential by unmasking its fusion peptide. Fusion occurs at the host cell plasma membrane. The transmembrane protein (TM) acts as a class I viral fusion protein. Under the current model, the protein has at least 3 conformational states: pre-fusion native state, pre-hairpin intermediate state, and post-fusion hairpin state. During viral and target cell membrane fusion, the coiled coil regions (heptad repeats) assume a trimer-of-hairpins structure, positioning the fusion peptide in close proximity to the C-terminal region of the ectodomain. The formation of this structure appears to drive apposition and subsequent fusion of viral and target cell membranes. Membranes fusion leads to delivery of the nucleocapsid into the cytoplasm. The protein is Envelope glycoprotein (env) of Felis catus (Cat).